Here is a 519-residue protein sequence, read N- to C-terminus: Membrane-bound glycerophospholipid O-acyltransferase 2 (519 aa).

The next 6 helical transmembrane spans lie at 22-42, 61-81, 88-108, 184-204, 236-256, and 263-283; these read PIDQ…AVWF, TLLG…HFLV, CIMI…FALG, FMGI…FIEG, LLVC…LPVE, and FQAT…LLAA. Residues Asn341 and His372 contribute to the active site. 3 helical membrane passes run 365–385, 415–435, and 443–463; these read FFLS…FLTG, LITW…FVLL, and FYSS…LLLP. Residues 497-519 are disordered; that stretch reads FSTMNNVCNQNRDTGSRHSSLTQ.

It belongs to the membrane-bound acyltransferase family. As to expression, highly expressed in epididymis, brain, testis, and ovary.

The protein resides in the endoplasmic reticulum membrane. The enzyme catalyses a 1-acyl-sn-glycero-3-phosphocholine + an acyl-CoA = a 1,2-diacyl-sn-glycero-3-phosphocholine + CoA. It catalyses the reaction a 1-acyl-sn-glycero-3-phosphoethanolamine + an acyl-CoA = a 1,2-diacyl-sn-glycero-3-phosphoethanolamine + CoA. The catalysed reaction is a 1-O-(1Z-alkenyl)-sn-glycero-3-phosphocholine + (9Z)-octadecenoyl-CoA = 1-O-(1Z)-alkenyl-2-(9Z)-octadecenoyl-sn-glycero-3-phosphocholine + CoA. It carries out the reaction a 1-O-(1Z-alkenyl)-sn-glycero-3-phosphoethanolamine + (9Z)-octadecenoyl-CoA = 1-O-(1Z)-alkenyl-2-(9Z)-octadecenoyl-sn-glycero-3-phosphoethanolamine + CoA. The enzyme catalyses 1-octadecanoyl-sn-glycero-3-phosphoethanolamine + (9Z)-octadecenoyl-CoA = 1-octadecanoyl-2-(9Z-octadecenoyl)-sn-glycero-3-phosphoethanolamine + CoA. It catalyses the reaction 1-octadecanoyl-sn-glycero-3-phosphocholine + (9Z)-octadecenoyl-CoA = 1-octadecanoyl-2-(9Z-octadecenoyl)-sn-glycero-3-phosphocholine + CoA. The catalysed reaction is 1-(9Z-octadecenoyl)-sn-glycero-3-phosphoethanolamine + (9Z)-octadecenoyl-CoA = 1,2-di-(9Z-octadecenoyl)-sn-glycero-3-phosphoethanolamine + CoA. It carries out the reaction 1-hexadecanoyl-sn-glycero-3-phosphoethanolamine + (9Z)-octadecenoyl-CoA = 1-hexadecanoyl-2-(9Z-octadecenoyl)-sn-glycero-3-phosphoethanolamine + CoA. The enzyme catalyses 1-hexadecanoyl-sn-glycero-3-phosphocholine + (9Z)-octadecenoyl-CoA = 1-hexadecanoyl-2-(9Z-octadecenoyl)-sn-glycero-3-phosphocholine + CoA. It catalyses the reaction (9Z)-hexadecenoyl-CoA + 1-hexadecanoyl-sn-glycero-3-phosphocholine = 1-hexadecanoyl-2-(9Z-hexadecenoyl)-sn-glycero-3-phosphocholine + CoA. The catalysed reaction is 1-hexadecanoyl-sn-glycero-3-phosphoethanolamine + (9Z)-hexadecenoyl-CoA = 1-hexadecanoyl-2-(9Z)-hexadecenoyl-sn-glycero-3-phosphoethanolamine + CoA. It carries out the reaction (9Z,12Z)-octadecadienoyl-CoA + 1-hexadecanoyl-sn-glycero-3-phosphocholine = 1-hexadecanoyl-2-(9Z,12Z-octadecadienoyl)-sn-glycero-3-phosphocholine + CoA. Its pathway is lipid metabolism; phospholipid metabolism. Its activity is regulated as follows. Partially inhibited by thimerosal. In terms of biological role, acyltransferase which catalyzes the transfer of an acyl group from an acyl-CoA to a lysophospholipid leading to the production of a phospholipid and participates in the reacylation step of the phospholipid remodeling pathway also known as the Lands cycle. Catalyzes the acylation of lysophosphatidylcholine (1-acyl-sn-glycero-3-phosphocholine or LPC) and to a lesser extend lysophosphatidylethanolamine (1-acyl-sn-glycero-3-phosphoethanolamine or LPE). Does not acylates lysophosphatidic acid (LPA) and lysophosphatidylserine. Prefers oleoyl-CoA as the acyl donor. May be involved in chondrocyte differentiation. This chain is Membrane-bound glycerophospholipid O-acyltransferase 2, found in Mus musculus (Mouse).